The sequence spans 259 residues: Malonyl-[acyl-carrier protein] O-methyltransferase 2 (259 aa).

The protein belongs to the methyltransferase superfamily.

It catalyses the reaction malonyl-[ACP] + S-adenosyl-L-methionine = malonyl-[ACP] methyl ester + S-adenosyl-L-homocysteine. It participates in cofactor biosynthesis; biotin biosynthesis. Converts the free carboxyl group of a malonyl-thioester to its methyl ester by transfer of a methyl group from S-adenosyl-L-methionine (SAM). It allows to synthesize pimeloyl-ACP via the fatty acid synthetic pathway. This is Malonyl-[acyl-carrier protein] O-methyltransferase 2 from Ilyobacter polytropus (strain ATCC 51220 / DSM 2926 / LMG 16218 / CuHBu1).